The sequence spans 265 residues: Dimethylsulfide dehydrogenase subunit gamma (265 aa).

A signal peptide spans 1 to 25 (MPGFRFLLAATAAFLATSPALPLSA). Positions 81 and 147 each coordinate heme b.

Heterotrimer of alpha, beta and gamma subunits. Heme b is required as a cofactor.

Its subcellular location is the periplasm. In terms of biological role, may transfer electrons to the iron-sulfur centers of DdhB. The sequence is that of Dimethylsulfide dehydrogenase subunit gamma (ddhC) from Rhodovulum sulfidophilum (Rhodobacter sulfidophilus).